Here is a 548-residue protein sequence, read N- to C-terminus: Phenylalanine--tRNA ligase beta subunit (548 aa).

One can recognise a B5 domain in the interval 275–350; sequence LKEDVLETTS…IAYGYNKFSG (76 aa). Positions 328, 334, 337, and 338 each coordinate Mg(2+).

Belongs to the phenylalanyl-tRNA synthetase beta subunit family. Type 2 subfamily. Tetramer of two alpha and two beta subunits. Mg(2+) is required as a cofactor.

The protein localises to the cytoplasm. The enzyme catalyses tRNA(Phe) + L-phenylalanine + ATP = L-phenylalanyl-tRNA(Phe) + AMP + diphosphate + H(+). The chain is Phenylalanine--tRNA ligase beta subunit from Methanocaldococcus jannaschii (strain ATCC 43067 / DSM 2661 / JAL-1 / JCM 10045 / NBRC 100440) (Methanococcus jannaschii).